A 213-amino-acid chain; its full sequence is Histone H1.3 (213 aa).

Position 1 is an N-acetylserine (Ser-1). A compositionally biased stretch (low complexity) spans Ser-1–Lys-15. Positions Ser-1–Val-41 are disordered. Lys-15 is subject to N6-acetyllysine. N6-(beta-hydroxybutyryl)lysine is present on residues Lys-35 and Lys-53. Positions Ala-37–Lys-110 constitute an H15 domain. Arg-55 is modified (citrulline). Lys-65, Lys-86, and Lys-91 each carry N6-(beta-hydroxybutyryl)lysine. A disordered region spans residues Gly-92 to Lys-213. Ser-105 bears the Phosphoserine mark. Position 107 is an N6-(beta-hydroxybutyryl)lysine (Lys-107). Basic and acidic residues predominate over residues Lys-107–Pro-119. Composition is skewed to basic residues over residues Lys-120–Lys-131, Lys-138–Lys-170, and Lys-179–Lys-213.

Belongs to the histone H1/H5 family. In terms of processing, H1 histones are progressively phosphorylated during the cell cycle, becoming maximally phosphorylated during late G2 phase and M phase, and being dephosphorylated sharply thereafter. Citrullination at Arg-55 (H1R54ci) by PADI4 takes place within the DNA-binding site of H1 and results in its displacement from chromatin and global chromatin decondensation, thereby promoting pluripotency and stem cell maintenance.

It is found in the nucleus. The protein localises to the chromosome. Histones H1 are necessary for the condensation of nucleosome chains into higher-order structures. The sequence is that of Histone H1.3 from Oryctolagus cuniculus (Rabbit).